The primary structure comprises 738 residues: Flagellar radial spoke protein 2 (738 aa).

At Arg-104 the chain carries Asymmetric dimethylarginine. Composition is skewed to acidic residues over residues 134-153 (PDWV…EDEA) and 161-182 (EGEE…DGEG). A disordered region spans residues 134–189 (PDWVAPEDDEAAAVETEDEAAGGAALAEGEEPPPEPEPEPEAAPEDGEGDAPAPKI). An Asymmetric dimethylarginine modification is found at Arg-260. Residues 357 to 426 (AAAEAAAAAP…PPKPKKKKKV (70 aa)) are disordered. Residues 371–415 (EGEEGEGEAPPAEEEPPAEEEAEEEEEEAEEGAEEGAEEGEEGEE) are compositionally biased toward acidic residues. 3 positions are modified to asymmetric dimethylarginine: Arg-453, Arg-538, and Arg-615. Positions 674–738 (AEAGEGEAVA…SSEESKAAAE (65 aa)) are disordered. Residues 689–730 (PAEAEAAPAEGEAAPPAEGEGEAQPAQEGSNSSSSSSDSSSS) show a composition bias toward low complexity.

This sequence belongs to the dpy-30 family. In terms of processing, asymmetrically dimethylated at Arg-104, Arg-260, Arg-453, Arg-538 and Arg-615 during flagellum resorption. Probably methylated by PRMT1.

It is found in the cytoplasm. It localises to the cytoskeleton. The protein localises to the flagellum axoneme. Its function is as follows. Flagellar radial spokes contribute to the regulation of dynein arm activity and thus the pattern of flagellar bending. They consist of a thin stalk, which is attached to the a subfiber of the outer doublet microtubule, and a bulbous head, which is attached to the stalk and appears to interact with the projections from the central pair of microtubules. Binds calmodulin in a calcium-dependent manner. This chain is Flagellar radial spoke protein 2, found in Chlamydomonas reinhardtii (Chlamydomonas smithii).